We begin with the raw amino-acid sequence, 153 residues long: MTDAEEPFWRAKRLEQMTRAEWESLCDGCAKCCLVKLEDEDTGELEYTDIACRLLDAETCRCSDYANRSERVPDCVTLTPKNLEDIDWMPPSCAYRLLKEGKDLPWWHPLVSGEYEAVRLAGMSVHGRFLFEDEADMEDLEGRIVSWPLMPPE.

This sequence belongs to the UPF0260 family.

This is UPF0260 protein Plav_0898 from Parvibaculum lavamentivorans (strain DS-1 / DSM 13023 / NCIMB 13966).